Consider the following 294-residue polypeptide: ATP synthase gamma chain (294 aa).

It belongs to the ATPase gamma chain family. In terms of assembly, F-type ATPases have 2 components, CF(1) - the catalytic core - and CF(0) - the membrane proton channel. CF(1) has five subunits: alpha(3), beta(3), gamma(1), delta(1), epsilon(1). CF(0) has three main subunits: a, b and c.

The protein resides in the cell inner membrane. Produces ATP from ADP in the presence of a proton gradient across the membrane. The gamma chain is believed to be important in regulating ATPase activity and the flow of protons through the CF(0) complex. In Campylobacter jejuni (strain RM1221), this protein is ATP synthase gamma chain.